A 145-amino-acid chain; its full sequence is D-aminoacyl-tRNA deacylase (145 aa).

The Gly-cisPro motif, important for rejection of L-amino acids signature appears at 137 to 138; that stretch reads GP.

This sequence belongs to the DTD family. In terms of assembly, homodimer.

Its subcellular location is the cytoplasm. It carries out the reaction glycyl-tRNA(Ala) + H2O = tRNA(Ala) + glycine + H(+). It catalyses the reaction a D-aminoacyl-tRNA + H2O = a tRNA + a D-alpha-amino acid + H(+). An aminoacyl-tRNA editing enzyme that deacylates mischarged D-aminoacyl-tRNAs. Also deacylates mischarged glycyl-tRNA(Ala), protecting cells against glycine mischarging by AlaRS. Acts via tRNA-based rather than protein-based catalysis; rejects L-amino acids rather than detecting D-amino acids in the active site. By recycling D-aminoacyl-tRNA to D-amino acids and free tRNA molecules, this enzyme counteracts the toxicity associated with the formation of D-aminoacyl-tRNA entities in vivo and helps enforce protein L-homochirality. The sequence is that of D-aminoacyl-tRNA deacylase from Pelobacter propionicus (strain DSM 2379 / NBRC 103807 / OttBd1).